A 303-amino-acid chain; its full sequence is Agmatinase (303 aa).

6 residues coordinate Mn(2+): His-126, Asp-149, His-151, Asp-153, Asp-230, and Asp-232.

Belongs to the arginase family. Agmatinase subfamily. It depends on Mn(2+) as a cofactor.

It carries out the reaction agmatine + H2O = urea + putrescine. Its function is as follows. Catalyzes the formation of putrescine from agmatine. This chain is Agmatinase (speB), found in Blochmanniella floridana.